We begin with the raw amino-acid sequence, 491 residues long: Transcription factor unc-3 (491 aa).

The interval 66–69 (RKSN) is interaction with DNA. The C5-type zinc-finger motif lies at 154–173 (CRVLLTHEVMCSRCCEKKSC). Interaction with DNA regions lie at residues 200-207 (NCLKNAGN) and 239-242 (NNSK). Positions 240–261 (NSKHGRRTKRTDASDDSEYSES) are disordered. One can recognise an IPT/TIG domain in the interval 269-355 (PVIKALFPSE…SRGTPLRFSY (87 aa)).

Belongs to the COE family. May homodimerise. Interacts with jmjd-3.1. May interact with GFI1 homolog pag-3.

The protein localises to the nucleus. In terms of biological role, transcription factor. Involved in motor neuron fate determination and maintenance, acting as an activator of gene expression in a subset of motor neurons. May act in concert with GFI1 homolog pag-3 in motor neuron fate determination. Required to maintain the expression of transcriptional repressors bnc-1 and cfi-1, which play roles in the cell fate of motor neurons. May play a role in the expression of proteins essential for axonal pathfinding and/or neuronal differentiation in both sensory and motor neurons. Cooperates with jmjd-3.1 and wdr-5.1 to ensure robust transdifferentiation of the Y rectal cell to the PDA motor neuron during larval development. In Caenorhabditis elegans, this protein is Transcription factor unc-3 (unc-3).